The sequence spans 295 residues: 4-hydroxy-tetrahydrodipicolinate synthase (295 aa).

T47 lines the pyruvate pocket. The active-site Proton donor/acceptor is Y135. K163 serves as the catalytic Schiff-base intermediate with substrate. I204 provides a ligand contact to pyruvate.

The protein belongs to the DapA family. As to quaternary structure, homotetramer; dimer of dimers.

The protein resides in the cytoplasm. The catalysed reaction is L-aspartate 4-semialdehyde + pyruvate = (2S,4S)-4-hydroxy-2,3,4,5-tetrahydrodipicolinate + H2O + H(+). It participates in amino-acid biosynthesis; L-lysine biosynthesis via DAP pathway; (S)-tetrahydrodipicolinate from L-aspartate: step 3/4. Its function is as follows. Catalyzes the condensation of (S)-aspartate-beta-semialdehyde [(S)-ASA] and pyruvate to 4-hydroxy-tetrahydrodipicolinate (HTPA). This is 4-hydroxy-tetrahydrodipicolinate synthase from Caldicellulosiruptor saccharolyticus (strain ATCC 43494 / DSM 8903 / Tp8T 6331).